The following is a 706-amino-acid chain: Ribosomal RNA large subunit methyltransferase K/L (706 aa).

One can recognise a THUMP domain in the interval 43-154 (LMYQSLLWSR…RDMASVALDL (112 aa)).

The protein belongs to the methyltransferase superfamily. RlmKL family.

It localises to the cytoplasm. It catalyses the reaction guanosine(2445) in 23S rRNA + S-adenosyl-L-methionine = N(2)-methylguanosine(2445) in 23S rRNA + S-adenosyl-L-homocysteine + H(+). The enzyme catalyses guanosine(2069) in 23S rRNA + S-adenosyl-L-methionine = N(2)-methylguanosine(2069) in 23S rRNA + S-adenosyl-L-homocysteine + H(+). Specifically methylates the guanine in position 2445 (m2G2445) and the guanine in position 2069 (m7G2069) of 23S rRNA. This is Ribosomal RNA large subunit methyltransferase K/L from Yersinia pseudotuberculosis serotype O:1b (strain IP 31758).